Here is a 154-residue protein sequence, read N- to C-terminus: Jupiter microtubule associated homolog 1 (154 aa).

At Met-1 the chain carries N-acetylmethionine. Positions 1–19 (MTTTTTFKGVDPNSRNSSR) are enriched in polar residues. Positions 1-154 (MTTTTTFKGV…PGGKSSLVLG (154 aa)) are disordered. The residue at position 2 (Thr-2) is an N-acetylthreonine; in Hematological and neurological expressed 1 protein, N-terminally processed. Phosphoserine occurs at positions 28 and 31. At Thr-54 the chain carries Phosphothreonine. Residues Ser-71, Ser-80, Ser-87, Ser-88, and Ser-92 each carry the phosphoserine modification. Positions 80–91 (SGPQRRNSSEAN) are enriched in polar residues. Basic and acidic residues predominate over residues 96–108 (LDLKGEGDVHENV). The span at 125–138 (PAAPVPSPVAPAPV) shows a compositional bias: pro residues. Residue Ser-131 is modified to Phosphoserine. Lys-148 carries the post-translational modification N6-acetyllysine.

This sequence belongs to the JUPITER family. In terms of assembly, interacts with the complex composed, at least, of APC, CTNNB1 and GSK3B; the interaction takes place with the inactive form of GSK3B (phosphorylated at 'Ser-9').

The protein localises to the nucleus. The protein resides in the cytoplasm. Functionally, modulates negatively AKT-mediated GSK3B signaling. Induces CTNNB1 'Ser-33' phosphorylation and degradation through the suppression of the inhibitory 'Ser-9' phosphorylation of GSK3B, which represses the function of the APC:CTNNB1:GSK3B complex and the interaction with CDH1/E-cadherin in adherent junctions. Plays a role in the regulation of cell cycle and cell adhesion. Has an inhibitory role on AR-signaling pathway through the induction of receptor proteasomal degradation. This is Jupiter microtubule associated homolog 1 from Bos taurus (Bovine).